The primary structure comprises 396 residues: Phosphoglycerate kinase (396 aa).

Residues D21–N23, R36, H59–R62, R118, and R151 each bind substrate. ATP is bound by residues K201, E323, and G353–T356.

Belongs to the phosphoglycerate kinase family. Monomer.

It is found in the cytoplasm. It carries out the reaction (2R)-3-phosphoglycerate + ATP = (2R)-3-phospho-glyceroyl phosphate + ADP. It functions in the pathway carbohydrate degradation; glycolysis; pyruvate from D-glyceraldehyde 3-phosphate: step 2/5. The polypeptide is Phosphoglycerate kinase (Granulibacter bethesdensis (strain ATCC BAA-1260 / CGDNIH1)).